Here is a 448-residue protein sequence, read N- to C-terminus: Histidine--tRNA ligase (448 aa).

2 disordered regions span residues 1-20 (MAIK…SPKL) and 428-448 (AGQA…QEKA).

The protein belongs to the class-II aminoacyl-tRNA synthetase family. In terms of assembly, homodimer.

The protein localises to the cytoplasm. It catalyses the reaction tRNA(His) + L-histidine + ATP = L-histidyl-tRNA(His) + AMP + diphosphate + H(+). The polypeptide is Histidine--tRNA ligase (Deinococcus deserti (strain DSM 17065 / CIP 109153 / LMG 22923 / VCD115)).